The following is a 316-amino-acid chain: Probable cell division protein WhiA (316 aa).

The H-T-H motif DNA-binding region spans 275–309 (TLKELGEMVESGKISKSGINHRLRKLDQIAEQLRN).

The protein belongs to the WhiA family.

In terms of biological role, involved in cell division and chromosome segregation. This is Probable cell division protein WhiA from Bacillus pumilus (strain SAFR-032).